The chain runs to 133 residues: Small ribosomal subunit protein uS8 (133 aa).

Belongs to the universal ribosomal protein uS8 family. In terms of assembly, part of the 30S ribosomal subunit.

One of the primary rRNA binding proteins, it binds directly to 16S rRNA central domain where it helps coordinate assembly of the platform of the 30S subunit. The sequence is that of Small ribosomal subunit protein uS8 from Saccharolobus solfataricus (strain ATCC 35092 / DSM 1617 / JCM 11322 / P2) (Sulfolobus solfataricus).